The sequence spans 199 residues: MVASVPLRNVSHLLSVLRSQNVPRYLQNGVPRDVLLFRHERGRFFAILGLFCAGQGIFWTSLAVAALSRPLSRVPAEAPNRSYQDLRSALWRYGLAVGCGTMGVLVLGAGLLYSLRSVRSVMLLAGGQQVTLTTYAPFGLGTCFTVPLNQISCMAHRGEVPAMLPLKVKGRRFYFLLDKAGHFPNTQLFDNTVGAYRSL.

The Mitochondrial matrix portion of the chain corresponds to 1 to 43 (MVASVPLRNVSHLLSVLRSQNVPRYLQNGVPRDVLLFRHERGR). A helical membrane pass occupies residues 44 to 64 (FFAILGLFCAGQGIFWTSLAV). Over 65-94 (AALSRPLSRVPAEAPNRSYQDLRSALWRYG) the chain is Mitochondrial intermembrane. Residues 95 to 115 (LAVGCGTMGVLVLGAGLLYSL) form a helical membrane-spanning segment. Over 116-199 (RSVRSVMLLA…DNTVGAYRSL (84 aa)) the chain is Mitochondrial matrix.

Belongs to the TMEM223 family. As to quaternary structure, associates with the mitochondrial ribosome.

The protein localises to the mitochondrion inner membrane. Mitochondrial ribosome-associated protein involved in the first steps of cytochrome c oxidase complex (complex IV) biogenesis. Stimulates the translation of MT-CO1 mRNA and is a constituent of early MT-CO1 assembly intermediates. The polypeptide is Transmembrane protein 223 (Mus musculus (Mouse)).